We begin with the raw amino-acid sequence, 309 residues long: tRNA dimethylallyltransferase (309 aa).

10 to 17 (GPTAVGKT) is a binding site for ATP. 12–17 (TAVGKT) contributes to the substrate binding site. Residues 35 to 38 (DSMQ) form an interaction with substrate tRNA region.

Belongs to the IPP transferase family. In terms of assembly, monomer. Mg(2+) is required as a cofactor.

It carries out the reaction adenosine(37) in tRNA + dimethylallyl diphosphate = N(6)-dimethylallyladenosine(37) in tRNA + diphosphate. In terms of biological role, catalyzes the transfer of a dimethylallyl group onto the adenine at position 37 in tRNAs that read codons beginning with uridine, leading to the formation of N6-(dimethylallyl)adenosine (i(6)A). In Clostridium botulinum (strain Alaska E43 / Type E3), this protein is tRNA dimethylallyltransferase.